A 691-amino-acid chain; its full sequence is F-box/LRR-repeat protein 5 (691 aa).

A hemerythrin-like region spans residues 1–159 (MAPFPEEVDV…IKKKVIAQHC (159 aa)). The Fe(3+) site is built by histidine 15, histidine 57, glutamate 58, glutamate 61, histidine 80, histidine 126, and glutamate 130. One can recognise an F-box domain in the interval 202 to 248 (STGITHLPPEVMLSIFSYLNPQELCRCSQVSMKWSQLTKTGSLWKHL). 7 LRR repeats span residues 340–364 (SSAV…LDLT), 365–392 (QTDI…DLSG), 393–418 (CEKI…QSGF), 479–508 (LWML…CVVE), 576–607 (TRLP…SLSG), 608–635 (CYQI…NLSG), and 636–661 (CLTI…YFYY). [2Fe-2S] cluster is bound by residues cysteine 662, cysteine 676, cysteine 686, and cysteine 687.

As to quaternary structure, part of a SCF (SKP1-cullin-F-box) protein ligase complex. Interacts with ACO1/IRP1, IREB2/IRP2; the interaction depends on the [2Fe-2S] cluster. Interacts with DCTN1/p150-glued. The cofactor is [2Fe-2S] cluster. In terms of processing, polybiquitinated upon iron and oxygen depletion, leading to its degradation by the proteasome. Ubiquitination is regulated by the hemerythrin-like region that acts as an oxygen and iron sensor. Undergoes constitutive ubiquitin-dependent degradation at the steady state by HERC2.

It is found in the cytoplasm. The protein localises to the perinuclear region. Its subcellular location is the nucleus. It functions in the pathway protein modification; protein ubiquitination. An iron-sulfur cluster promotes IRP2 polyubiquitination and degradation in response to both iron and oxygen concentrations. Functionally, component of some SCF (SKP1-cullin-F-box) protein ligase complex that plays a central role in iron homeostasis by promoting the ubiquitination and subsequent degradation of IREB2/IRP2. The C-terminal domain of FBXL5 contains a redox-sensitive [2Fe-2S] cluster that, upon oxidation, promotes binding to IRP2 to effect its oxygen-dependent degradation. Under iron deficiency conditions, the N-terminal hemerythrin-like (Hr) region, which contains a diiron metal center, cannot bind iron and undergoes conformational changes that destabilize the FBXL5 protein and cause its ubiquitination and degradation. When intracellular iron levels start rising, the Hr region is stabilized. Additional increases in iron levels facilitate the assembly and incorporation of a redox active [2Fe-2S] cluster in the C-terminal domain. Only when oxygen level is high enough to maintain the cluster in its oxidized state can FBXL5 recruit IRP2 as a substrate for polyubiquination and degradation. Promotes ubiquitination and subsequent degradation of the dynactin complex component DCTN1. Within the nucleus, promotes the ubiquitination of SNAI1; preventing its interaction with DNA and promoting its degradation. Negatively regulates DNA damage response by mediating the ubiquitin-proteasome degradation of the DNA repair protein NABP2. The polypeptide is F-box/LRR-repeat protein 5 (FBXL5) (Pongo abelii (Sumatran orangutan)).